A 183-amino-acid polypeptide reads, in one-letter code: Ribosome rescue factor SmrB (183 aa).

Residues 98–173 (LDLHGLTQLQ…GDAALLVLIE (76 aa)) enclose the Smr domain.

The protein belongs to the SmrB family. As to quaternary structure, associates with collided ribosomes, but not with correctly translating polysomes.

Its function is as follows. Acts as a ribosome collision sensor. Detects stalled/collided disomes (pairs of ribosomes where the leading ribosome is stalled and a second ribosome has collided with it) and endonucleolytically cleaves mRNA at the 5' boundary of the stalled ribosome. Stalled/collided disomes form a new interface (primarily via the 30S subunits) that binds SmrB. Cleaved mRNA becomes available for tmRNA ligation, leading to ribosomal subunit dissociation and rescue of stalled ribosomes. This is Ribosome rescue factor SmrB from Salmonella agona (strain SL483).